A 160-amino-acid chain; its full sequence is SsrA-binding protein (160 aa).

Basic and acidic residues predominate over residues 137-153 (DKRDDIKTREWKQDKAR). Residues 137 to 160 (DKRDDIKTREWKQDKARIMKNANR) form a disordered region.

Belongs to the SmpB family.

It localises to the cytoplasm. In terms of biological role, required for rescue of stalled ribosomes mediated by trans-translation. Binds to transfer-messenger RNA (tmRNA), required for stable association of tmRNA with ribosomes. tmRNA and SmpB together mimic tRNA shape, replacing the anticodon stem-loop with SmpB. tmRNA is encoded by the ssrA gene; the 2 termini fold to resemble tRNA(Ala) and it encodes a 'tag peptide', a short internal open reading frame. During trans-translation Ala-aminoacylated tmRNA acts like a tRNA, entering the A-site of stalled ribosomes, displacing the stalled mRNA. The ribosome then switches to translate the ORF on the tmRNA; the nascent peptide is terminated with the 'tag peptide' encoded by the tmRNA and targeted for degradation. The ribosome is freed to recommence translation, which seems to be the essential function of trans-translation. This Edwardsiella ictaluri (strain 93-146) protein is SsrA-binding protein.